Here is a 367-residue protein sequence, read N- to C-terminus: Anhydro-N-acetylmuramic acid kinase (367 aa).

11–18 is a binding site for ATP; the sequence is GTSLDGVD.

Belongs to the anhydro-N-acetylmuramic acid kinase family.

The catalysed reaction is 1,6-anhydro-N-acetyl-beta-muramate + ATP + H2O = N-acetyl-D-muramate 6-phosphate + ADP + H(+). The protein operates within amino-sugar metabolism; 1,6-anhydro-N-acetylmuramate degradation. It functions in the pathway cell wall biogenesis; peptidoglycan recycling. Its function is as follows. Catalyzes the specific phosphorylation of 1,6-anhydro-N-acetylmuramic acid (anhMurNAc) with the simultaneous cleavage of the 1,6-anhydro ring, generating MurNAc-6-P. Is required for the utilization of anhMurNAc either imported from the medium or derived from its own cell wall murein, and thus plays a role in cell wall recycling. The polypeptide is Anhydro-N-acetylmuramic acid kinase (Rhodopseudomonas palustris (strain ATCC BAA-98 / CGA009)).